The sequence spans 348 residues: Selenide, water dikinase (348 aa).

The active site involves Cys-17. ATP-binding positions include Lys-20 and Thr-47–Asp-49. Asp-50 is a binding site for Mg(2+). ATP contacts are provided by residues Asp-67, Asp-90, and Gly-138–Thr-140. Asp-90 contacts Mg(2+). Residue Asp-226 coordinates Mg(2+).

The protein belongs to the selenophosphate synthase 1 family. Class I subfamily. In terms of assembly, homodimer. The cofactor is Mg(2+).

The catalysed reaction is hydrogenselenide + ATP + H2O = selenophosphate + AMP + phosphate + 2 H(+). Functionally, synthesizes selenophosphate from selenide and ATP. The chain is Selenide, water dikinase from Porphyromonas gingivalis (strain ATCC 33277 / DSM 20709 / CIP 103683 / JCM 12257 / NCTC 11834 / 2561).